A 1002-amino-acid chain; its full sequence is Eukaryotic translation initiation factor 5B (1002 aa).

Disordered stretches follow at residues Met-1 to Ala-172 and Glu-184 to Asp-402. Acidic residues predominate over residues Trp-13 to Gln-23. The segment covering Ile-27–Ser-37 has biased composition (polar residues). The segment covering Glu-47–Ala-57 has biased composition (low complexity). Basic and acidic residues-rich tracts occupy residues Lys-75–Ala-111 and Gln-120–Lys-154. The span at Pro-155–Ala-172 shows a compositional bias: low complexity. 2 stretches are compositionally biased toward basic and acidic residues: residues Glu-184–Arg-252 and Ala-267–Pro-276. Over residues Lys-277 to Arg-287 the composition is skewed to basic residues. Residues Ile-297 to Glu-306 are compositionally biased toward basic and acidic residues. Composition is skewed to acidic residues over residues Val-307 to Gln-342 and Asp-352 to Glu-370. The span at Ser-381–Pro-398 shows a compositional bias: low complexity. A tr-type G domain is found at Leu-403–Ser-621. Ser-405 carries the post-translational modification Phosphoserine. Residues Gly-412–Thr-419 form a G1 region. Asp-415 is a K(+) binding site. Asp-415 contacts Na(+). GTP is bound by residues Asp-415 to Lys-420, Gln-431, and Gly-437 to Thr-439. Thr-419 provides a ligand contact to Mg(2+). Gly-437 is a binding site for K(+). Gly-437 is a binding site for Na(+). Residues Gly-437–Gln-441 form a G2 region. Thr-439 contributes to the Mg(2+) binding site. Residues Asp-476–Gly-479 are G3. Residues Asn-530 to Asp-533 and Ala-599 to Val-600 each bind GTP. The tract at residues Asn-530–Asp-533 is G4. The segment at Ser-598 to Val-600 is G5.

This sequence belongs to the TRAFAC class translation factor GTPase superfamily. Classic translation factor GTPase family. IF-2 subfamily. Requires Na(+) as cofactor. K(+) is required as a cofactor.

It localises to the cytoplasm. It catalyses the reaction GTP + H2O = GDP + phosphate + H(+). Its function is as follows. Plays a role in translation initiation. Translational GTPase that catalyzes the joining of the 40S and 60S subunits to form the 80S initiation complex with the initiator methionine-tRNA in the P-site base paired to the start codon. GTP binding and hydrolysis induces conformational changes in the enzyme that renders it active for productive interactions with the ribosome. The release of the enzyme after formation of the initiation complex is a prerequisite to form elongation-competent ribosomes. Stimulates 20S pre-rRNA cleavage to mature 18S rRNA by PIN-domain endonuclease NOB1. The sequence is that of Eukaryotic translation initiation factor 5B from Saccharomyces cerevisiae (strain ATCC 204508 / S288c) (Baker's yeast).